The chain runs to 90 residues: Cell division topological specificity factor (90 aa).

This sequence belongs to the MinE family.

In terms of biological role, prevents the cell division inhibition by proteins MinC and MinD at internal division sites while permitting inhibition at polar sites. This ensures cell division at the proper site by restricting the formation of a division septum at the midpoint of the long axis of the cell. The protein is Cell division topological specificity factor of Bordetella avium (strain 197N).